The chain runs to 86 residues: Toxin Tpa5 (86 aa).

Positions 1-20 are cleaved as a signal peptide; it reads MSIFPIALALLLIGLEEGEA. In terms of domain architecture, LCN-type CS-alpha/beta spans 22 to 85; the sequence is RDGYPISKNN…WGDPGTPPCM (64 aa). 4 disulfides stabilise this stretch: cysteine 33–cysteine 84, cysteine 37–cysteine 58, cysteine 43–cysteine 64, and cysteine 47–cysteine 66.

It belongs to the long (4 C-C) scorpion toxin superfamily. Sodium channel inhibitor family. Beta subfamily. Expressed by the venom gland.

It localises to the secreted. Beta toxins bind voltage-independently at site-4 of sodium channels (Nav) and shift the voltage of activation toward more negative potentials thereby affecting sodium channel activation and promoting spontaneous and repetitive firing. The protein is Toxin Tpa5 of Tityus pachyurus (Colombian scorpion).